A 152-amino-acid chain; its full sequence is uncharacterized protein (152 aa).

Residues 7–27 (TLSVIVFLISLIIIFGIYFSS) traverse the membrane as a helical segment.

The protein resides in the membrane. This is an uncharacterized protein from Methanocaldococcus jannaschii (strain ATCC 43067 / DSM 2661 / JAL-1 / JCM 10045 / NBRC 100440) (Methanococcus jannaschii).